Consider the following 208-residue polypeptide: Probable GTP-binding protein EngB (208 aa).

The EngB-type G domain maps to 23 to 205 (LTSEMVILGR…RQTLLKYLLT (183 aa)). GTP is bound by residues 31 to 38 (GRSNVGKS), 57 to 61 (GKTRL), 84 to 87 (DLPG), 154 to 157 (TKFD), and 182 to 184 (FNA). 2 residues coordinate Mg(2+): S38 and T59.

This sequence belongs to the TRAFAC class TrmE-Era-EngA-EngB-Septin-like GTPase superfamily. EngB GTPase family. Mg(2+) is required as a cofactor.

In terms of biological role, necessary for normal cell division and for the maintenance of normal septation. This Helicobacter pylori (strain HPAG1) protein is Probable GTP-binding protein EngB.